The sequence spans 189 residues: UPF0149 protein VSAL_I2539 (189 aa).

It belongs to the UPF0149 family.

In Aliivibrio salmonicida (strain LFI1238) (Vibrio salmonicida (strain LFI1238)), this protein is UPF0149 protein VSAL_I2539.